Here is a 481-residue protein sequence, read N- to C-terminus: ATP synthase subunit beta (481 aa).

An ATP-binding site is contributed by 167-174 (GGAGVGKT).

It belongs to the ATPase alpha/beta chains family. As to quaternary structure, F-type ATPases have 2 components, CF(1) - the catalytic core - and CF(0) - the membrane proton channel. CF(1) has five subunits: alpha(3), beta(3), gamma(1), delta(1), epsilon(1). CF(0) has three main subunits: a(1), b(2) and c(9-12). The alpha and beta chains form an alternating ring which encloses part of the gamma chain. CF(1) is attached to CF(0) by a central stalk formed by the gamma and epsilon chains, while a peripheral stalk is formed by the delta and b chains.

The protein localises to the cell membrane. It catalyses the reaction ATP + H2O + 4 H(+)(in) = ADP + phosphate + 5 H(+)(out). Produces ATP from ADP in the presence of a proton gradient across the membrane. The catalytic sites are hosted primarily by the beta subunits. The polypeptide is ATP synthase subunit beta (Corynebacterium jeikeium (strain K411)).